Reading from the N-terminus, the 664-residue chain is Sulfoquinovosidase (664 aa).

3-(6-sulfo-alpha-D-quinovosyl)glycerol is bound by residues Glu135, Glu270, Arg283, Leu284, and Trp286. The Nucleophile role is filled by Asp388. Residue Glu391 is part of the active site. Arg438 serves as a coordination point for 3-(6-sulfo-alpha-D-quinovosyl)glycerol. Asp455 functions as the Proton donor in the catalytic mechanism. 3-(6-sulfo-alpha-D-quinovosyl)glycerol is bound at residue His520.

It belongs to the glycosyl hydrolase 31 family.

It carries out the reaction 3-(6-sulfo-alpha-D-quinovosyl)glycerol + H2O = 6-sulfo-alpha-D-quinovose + glycerol. Part of the sulfoquinovose monooxygenase (sulfo-SMO) pathway, a D-sulfoquinovose degradation pathway that enables the complete utilization of all carbons within sulfoquinovose (SQ) with concomitant production of inorganic sulfite. Catalyzes the first step of the pathway, the hydrolysis of sulfoquinovosyl glycerol (SQGro) to release sulfoquinovose (SQ). Hydrolyzes both epimers of SQGro, with a preference for the natural 2'R isomer. In vitro, can use the substrate analog para-nitrophenyl alpha-sulfoquinovoside (PNPSQ), but shows no detectable activity toward 4-nitrophenyl alpha-D-glucopyranoside (PNPGlc). The sequence is that of Sulfoquinovosidase from Agrobacterium fabrum (strain C58 / ATCC 33970) (Agrobacterium tumefaciens (strain C58)).